A 131-amino-acid chain; its full sequence is Fumarate reductase subunit C (131 aa).

The next 3 membrane-spanning stretches (helical) occupy residues 30–50 (EGTAVPAVWFSIELIFGLFAL), 57–77 (WMGFVGFLQNPVVVILNLITL), and 109–129 (IIKGLWVVTAVVTVVILYVAL).

This sequence belongs to the FrdC family. In terms of assembly, part of an enzyme complex containing four subunits: a flavoprotein (FrdA), an iron-sulfur protein (FrdB), and two hydrophobic anchor proteins (FrdC and FrdD).

The protein localises to the cell inner membrane. Its function is as follows. Two distinct, membrane-bound, FAD-containing enzymes are responsible for the catalysis of fumarate and succinate interconversion; fumarate reductase is used in anaerobic growth, and succinate dehydrogenase is used in aerobic growth. Anchors the catalytic components of the fumarate reductase complex to the cell inner membrane, binds quinones. The sequence is that of Fumarate reductase subunit C from Salmonella choleraesuis (strain SC-B67).